A 161-amino-acid chain; its full sequence is uncharacterized protein (161 aa).

This sequence to M.thermoautotrophicum MTH862.

This is an uncharacterized protein from Methanocaldococcus jannaschii (strain ATCC 43067 / DSM 2661 / JAL-1 / JCM 10045 / NBRC 100440) (Methanococcus jannaschii).